The sequence spans 204 residues: Ribosome maturation factor RimP (204 aa).

It belongs to the RimP family.

The protein resides in the cytoplasm. Its function is as follows. Required for maturation of 30S ribosomal subunits. This is Ribosome maturation factor RimP from Albidiferax ferrireducens (strain ATCC BAA-621 / DSM 15236 / T118) (Rhodoferax ferrireducens).